A 471-amino-acid polypeptide reads, in one-letter code: 6-phosphofructo-2-kinase/fructose-2,6-bisphosphatase 1 (471 aa).

Serine 2 carries the N-acetylserine modification. Residues 2–250 are 6-phosphofructo-2-kinase; the sequence is SPEMGELTQT…VYYLMNIHVT (249 aa). Phosphoserine; by PKA is present on serine 33. 49 to 57 serves as a coordination point for ATP; the sequence is GLPARGKTY. Residues arginine 82 and arginine 105 each contribute to the beta-D-fructose 6-phosphate site. The active site involves aspartate 131. Beta-D-fructose 6-phosphate contacts are provided by threonine 133 and arginine 139. Position 141 is a phosphoserine (serine 141). Residue cysteine 161 is part of the active site. 170–175 serves as a coordination point for ATP; sequence NIRQVK. Beta-D-fructose 6-phosphate-binding residues include lysine 175, arginine 196, and tyrosine 200. The segment at 251 to 471 is fructose-2,6-bisphosphatase; that stretch reads PRSIYLCRHG…EALDTVPAHY (221 aa). Arginine 258 provides a ligand contact to beta-D-fructose 2,6-bisphosphate. Residue histidine 259 is the Tele-phosphohistidine intermediate of the active site. Beta-D-fructose 2,6-bisphosphate contacts are provided by asparagine 265, glycine 271, and arginine 308. Glutamate 328 acts as the Proton donor/acceptor in catalysis. Tyrosine 339, arginine 353, lysine 357, tyrosine 368, glutamine 394, and arginine 398 together coordinate beta-D-fructose 2,6-bisphosphate. An ATP-binding site is contributed by 350–353; sequence FALR. ATP-binding positions include 394-398 and tyrosine 430; that span reads QAVMR.

The protein in the C-terminal section; belongs to the phosphoglycerate mutase family. As to quaternary structure, homodimer. As to expression, liver.

The enzyme catalyses beta-D-fructose 2,6-bisphosphate + H2O = beta-D-fructose 6-phosphate + phosphate. It catalyses the reaction beta-D-fructose 6-phosphate + ATP = beta-D-fructose 2,6-bisphosphate + ADP + H(+). Phosphorylation at Ser-33 inhibits the kinase and activates the bisphosphatase. In terms of biological role, synthesis and degradation of fructose 2,6-bisphosphate. The chain is 6-phosphofructo-2-kinase/fructose-2,6-bisphosphatase 1 from Homo sapiens (Human).